Here is a 119-residue protein sequence, read N- to C-terminus: Large ribosomal subunit protein uL24 (119 aa).

The protein belongs to the universal ribosomal protein uL24 family. In terms of assembly, part of the 50S ribosomal subunit.

One of two assembly initiator proteins, it binds directly to the 5'-end of the 23S rRNA, where it nucleates assembly of the 50S subunit. Its function is as follows. One of the proteins that surrounds the polypeptide exit tunnel on the outside of the subunit. In Sulfurihydrogenibium sp. (strain YO3AOP1), this protein is Large ribosomal subunit protein uL24.